An 806-amino-acid polypeptide reads, in one-letter code: Plasminogen (806 aa).

A signal peptide spans 1-19 (MEYGKVIFLFLLFLKSGQG). The 79-residue stretch at 20 to 98 (ESLENYIKTE…RDVVLFEKRI (79 aa)) folds into the PAN domain. Cystine bridges form between Cys49/Cys73, Cys53/Cys61, Cys103/Cys181, Cys124/Cys164, Cys152/Cys176, Cys185/Cys262, Cys188/Cys316, Cys206/Cys245, Cys234/Cys257, Cys275/Cys352, Cys296/Cys335, Cys324/Cys347, Cys371/Cys448, Cys392/Cys431, Cys420/Cys443, Cys476/Cys555, Cys497/Cys538, Cys526/Cys550, Cys563/Cys681, Cys573/Cys581, and Cys603/Cys619. 5 consecutive Kringle domains span residues 102–181 (DCKS…VPEC), 184–262 (ECMH…IPRC), 274–352 (QCLK…IPSC), 370–448 (ECYE…LEKC), and 475–555 (DCMY…IPQC). A Peptidase S1 domain is found at 577–804 (IVGGCYAQPH…YISWIEDVMK (228 aa)). Residue Ser593 is modified to Phosphoserine. Residues His618 and Asp661 each act as charge relay system in the active site. Residue Ser684 is modified to Phosphoserine. 3 disulfide bridges follow: Cys695/Cys762, Cys725/Cys741, and Cys752/Cys780. Residue Ser756 is the Charge relay system of the active site.

This sequence belongs to the peptidase S1 family. Plasminogen subfamily. As to quaternary structure, interacts with CSPG4 and AMOT. Interacts (via the Kringle domains) with HRG; the interaction tethers PLG to the cell surface and enhances its activation. Interacts (via Kringle 4 domain) with ADA; the interaction stimulates PLG activation when in complex with DPP4. Angiostatin: Interacts with ATP5F1A; the interaction inhibits most of the angiogenic effects of angiostatin. In the presence of the inhibitor, the activation involves only cleavage after Arg-576, yielding two chains held together by two disulfide bonds. In the absence of the inhibitor, the activation involves additionally the removal of the activation peptide.

Its subcellular location is the secreted. The catalysed reaction is Preferential cleavage: Lys-|-Xaa &gt; Arg-|-Xaa, higher selectivity than trypsin. Converts fibrin into soluble products.. Converted into plasmin by plasminogen activators, both plasminogen and its activator being bound to fibrin. Activated with catalytic amounts of streptokinase. Its function is as follows. Plasmin dissolves the fibrin of blood clots and acts as a proteolytic factor in a variety of other processes including embryonic development, tissue remodeling, tumor invasion, and inflammation. In ovulation, weakens the walls of the Graafian follicle. It activates the urokinase-type plasminogen activator, collagenases and several complement zymogens, such as C1, C4 and C5. Cleavage of fibronectin and laminin leads to cell detachment and apoptosis. Also cleaves fibrin, thrombospondin and von Willebrand factor. Its role in tissue remodeling and tumor invasion may be modulated by CSPG4. Binds to cells. The polypeptide is Plasminogen (PLG) (Notamacropus eugenii (Tammar wallaby)).